Here is a 130-residue protein sequence, read N- to C-terminus: Large ribosomal subunit protein bL17 (130 aa).

Belongs to the bacterial ribosomal protein bL17 family. As to quaternary structure, part of the 50S ribosomal subunit. Contacts protein L32.

The protein is Large ribosomal subunit protein bL17 of Buchnera aphidicola subsp. Acyrthosiphon pisum (strain APS) (Acyrthosiphon pisum symbiotic bacterium).